Here is a 293-residue protein sequence, read N- to C-terminus: Light-independent protochlorophyllide reductase iron-sulfur ATP-binding protein (293 aa).

ATP-binding positions include 10-15 (GIGKST) and Lys-39. Ser-14 is a binding site for Mg(2+). Positions 95 and 129 each coordinate [4Fe-4S] cluster. 180-181 (NR) is an ATP binding site.

Belongs to the NifH/BchL/ChlL family. Homodimer. Protochlorophyllide reductase is composed of three subunits; ChlL, ChlN and ChlB. [4Fe-4S] cluster serves as cofactor.

It localises to the plastid. Its subcellular location is the chloroplast. The enzyme catalyses chlorophyllide a + oxidized 2[4Fe-4S]-[ferredoxin] + 2 ADP + 2 phosphate = protochlorophyllide a + reduced 2[4Fe-4S]-[ferredoxin] + 2 ATP + 2 H2O. It functions in the pathway porphyrin-containing compound metabolism; chlorophyll biosynthesis (light-independent). Functionally, component of the dark-operative protochlorophyllide reductase (DPOR) that uses Mg-ATP and reduced ferredoxin to reduce ring D of protochlorophyllide (Pchlide) to form chlorophyllide a (Chlide). This reaction is light-independent. The L component serves as a unique electron donor to the NB-component of the complex, and binds Mg-ATP. The protein is Light-independent protochlorophyllide reductase iron-sulfur ATP-binding protein of Adiantum capillus-veneris (Maidenhair fern).